Consider the following 328-residue polypeptide: Phenylalanine--tRNA ligase alpha subunit (328 aa).

Residue Glu-253 participates in Mg(2+) binding.

The protein belongs to the class-II aminoacyl-tRNA synthetase family. Phe-tRNA synthetase alpha subunit type 1 subfamily. As to quaternary structure, tetramer of two alpha and two beta subunits. Mg(2+) is required as a cofactor.

It is found in the cytoplasm. It catalyses the reaction tRNA(Phe) + L-phenylalanine + ATP = L-phenylalanyl-tRNA(Phe) + AMP + diphosphate + H(+). In Coxiella burnetii (strain CbuG_Q212) (Coxiella burnetii (strain Q212)), this protein is Phenylalanine--tRNA ligase alpha subunit.